The primary structure comprises 544 residues: Chromatin assembly factor 1 subunit A (544 aa).

Polar residues predominate over residues 1–22; sequence MNSESVDSDVAASTSNKGNELC. Disordered stretches follow at residues 1–52, 67–117, and 138–160; these read MNSE…EADE, IYNG…REQE, and QEQQ…AQRL. Over residues 23–35 the composition is skewed to low complexity; sequence SSSTDITSLSVSS. The span at 36–47 shows a compositional bias: polar residues; that stretch reads PNESVIHSSHSA. The segment at 56–170 is interaction with DNA and pcn1/PCNA; sequence KLSYEGNRKK…RQEQILNKER (115 aa). The span at 74 to 117 shows a compositional bias: basic and acidic residues; that stretch reads AGKEKKLQKQRAQEERIRQKEAERLKREKERQQREQEKKLREQE. Residues 76–176 adopt a coiled-coil conformation; it reads KEKKLQKQRA…NKERQQLKLN (101 aa). Positions 172-179 match the PCNA-interaction protein (PIP box) motif; sequence QLKLNNFF. The interval 325-396 is interaction with histones H3/H4; the sequence is SNVLLNPWLE…DKDSVNASNT (72 aa). Over residues 351-388 the composition is skewed to acidic residues; it reads DEEDDGEDLESEDEEVDNSDDIVEDGDNAFVDDEDDDK. Residues 351–400 form a disordered region; it reads DEEDDGEDLESEDEEVDNSDDIVEDGDNAFVDDEDDDKDSVNASNTHRSS.

The protein belongs to the RLF2 family. Component of chromatin assembly factor 1 (CAF-1), composed of pcf1, pcf2 and pcf3. Interacts (via PIP motif) with pcn1/PCNA; the interaction is direct and occurs during S-phase. Interacts with swi6 at the G1/S-phase transition and early S-phase, but not in the G2 phase. The CAF-1 complex interacts with histone H3/H4 dimers.

Its subcellular location is the nucleus. Its function is as follows. Acts as a component of the histone chaperone complex chromatin assembly factor 1 (CAF-1), which assembles histone octamers onto DNA during replication and repair. CAF-1 performs the first step of the nucleosome assembly process, bringing newly synthesized histones H3 and H4 to replicating DNA; histones H2A/H2B can bind to this chromatin precursor subsequent to DNA replication to complete the histone octamer. Plays a role in the maintenance of heterochromatin. This Schizosaccharomyces pombe (strain 972 / ATCC 24843) (Fission yeast) protein is Chromatin assembly factor 1 subunit A.